Reading from the N-terminus, the 250-residue chain is Flap endonuclease Xni (250 aa).

Position 104 (Asp-104) interacts with Mg(2+). The region spanning Val-160–Leu-249 is the 5'-3' exonuclease domain. Positions 171, 172, 180, 182, and 185 each coordinate K(+). The interaction with DNA stretch occupies residues Gly-184–Ser-189.

The protein belongs to the Xni family. Mg(2+) serves as cofactor. The cofactor is K(+).

Its function is as follows. Has flap endonuclease activity. During DNA replication, flap endonucleases cleave the 5'-overhanging flap structure that is generated by displacement synthesis when DNA polymerase encounters the 5'-end of a downstream Okazaki fragment. In Sodalis glossinidius (strain morsitans), this protein is Flap endonuclease Xni.